We begin with the raw amino-acid sequence, 210 residues long: Protein-methionine-sulfoxide reductase heme-binding subunit MsrQ (210 aa).

The next 6 helical transmembrane spans lie at 8-28 (LAVFLAACIAPVWWLYQAWIF), 37-57 (VLVENFGVATLVMLLITLSMT), 75-95 (LGLWCFAYALLHLSMYALFIL), 110-130 (PYIIVGALALLGLLALAVTSN), 147-167 (IIYVILGLGLLHMFWIVRADL), and 169-189 (EWALYAGIGAFLLLLRIPVFA).

It belongs to the MsrQ family. As to quaternary structure, heterodimer of a catalytic subunit (MsrP) and a heme-binding subunit (MsrQ). FMN is required as a cofactor. It depends on heme b as a cofactor.

Its subcellular location is the cell inner membrane. Part of the MsrPQ system that repairs oxidized periplasmic proteins containing methionine sulfoxide residues (Met-O), using respiratory chain electrons. Thus protects these proteins from oxidative-stress damage caused by reactive species of oxygen and chlorine generated by the host defense mechanisms. MsrPQ is essential for the maintenance of envelope integrity under bleach stress, rescuing a wide series of structurally unrelated periplasmic proteins from methionine oxidation. MsrQ provides electrons for reduction to the reductase catalytic subunit MsrP, using the quinone pool of the respiratory chain. The sequence is that of Protein-methionine-sulfoxide reductase heme-binding subunit MsrQ from Pseudomonas syringae pv. syringae (strain B728a).